The primary structure comprises 436 residues: Cyclic nucleotide-binding domain-containing protein 1 (436 aa).

Over residues 89 to 105 (EQRELNEGKEESQHQQP) the composition is skewed to basic and acidic residues. The interval 89–108 (EQRELNEGKEESQHQQPDDS) is disordered. An a nucleoside 3',5'-cyclic phosphate-binding site is contributed by 322–436 (YYEEWPTLSI…IIEDKDLFVA (115 aa)).

The protein is Cyclic nucleotide-binding domain-containing protein 1 (CNBD1) of Homo sapiens (Human).